The following is a 193-amino-acid chain: Large ribosomal subunit protein bL25 (193 aa).

Belongs to the bacterial ribosomal protein bL25 family. CTC subfamily. In terms of assembly, part of the 50S ribosomal subunit; part of the 5S rRNA/L5/L18/L25 subcomplex. Contacts the 5S rRNA. Binds to the 5S rRNA independently of L5 and L18.

This is one of the proteins that binds to the 5S RNA in the ribosome where it forms part of the central protuberance. This Oleidesulfovibrio alaskensis (strain ATCC BAA-1058 / DSM 17464 / G20) (Desulfovibrio alaskensis) protein is Large ribosomal subunit protein bL25.